A 1776-amino-acid chain; its full sequence is 6-methylsalicylic acid synthase (1776 aa).

A compositionally biased stretch (low complexity) spans 1-18 (MHSVSPSTYPSGGTSPAP). A disordered region spans residues 1 to 26 (MHSVSPSTYPSGGTSPAPADTPGTEY). Residues 32 to 457 (SNDVAVVGMA…GTVSHAVIEE (426 aa)) form the Ketosynthase family 3 (KS3) domain. Catalysis depends on for beta-ketoacyl synthase activity residues C204, H339, and H379. Residues 567–880 (VWVFSGHGAQ…IAQLHCRGAE (314 aa)) form a malonyl-CoA:ACP transacylase (MAT) domain region. The N-terminal hotdog fold stretch occupies residues 925–1044 (HTLLGQRIPV…AYWDRKVLGS (120 aa)). Positions 925-1196 (HTLLGQRIPV…FTAMRFSEIE (272 aa)) are dehydratase (DH) domain. Positions 925–1201 (HTLLGQRIPV…FSEIEGTPGV (277 aa)) constitute a PKS/mFAS DH domain. H957 functions as the Proton acceptor; for dehydratase activity in the catalytic mechanism. Positions 1058–1201 (TTKLADNFSI…FSEIEGTPGV (144 aa)) are C-terminal hotdog fold. The active-site Proton donor; for dehydratase activity is D1113. Residues 1205 to 1657 (MESLVHQIAW…LRSLAIDDGE (453 aa)) are product template (PT) domain. In terms of domain architecture, Carrier spans 1700–1774 (AYLDEKIRGC…HLVVWFAEKI (75 aa)). S1734 bears the O-(pantetheine 4'-phosphoryl)serine mark.

It is found in the cytoplasm. Its subcellular location is the cytosol. It carries out the reaction 3 malonyl-CoA + acetyl-CoA + NADPH + 3 H(+) = 6-methylsalicylate + 3 CO2 + NADP(+) + 4 CoA + H2O. It participates in mycotoxin biosynthesis; patulin biosynthesis. In terms of biological role, 6-methylsalicylic acid synthase; part of the gene cluster that mediates the biosynthesis of patulin, an acetate-derived tetraketide mycotoxin produced by several fungal species that shows antimicrobial properties against several bacteria. PatK catalyzes the first step of the pathway which is the synthesis of 6-methylsalicylic acid via condensation of 1 acetate and 3 malonate units. The pathway begins with the synthesis of 6-methylsalicylic acid by the polyketide synthase (PKS) patK via condensation of acetate and malonate units. The 6-methylsalicylic acid decarboxylase patG then catalyzes the decarboxylation of 6-methylsalicylic acid to yield m-cresol (also known as 3-methylphenol). These first reactions occur in the cytosol. The intermediate m-cresol is then transported into the endoplasmic reticulum where the cytochrome P450 monooxygenase patH converts it to m-hydroxybenzyl alcohol, which is further converted to gentisyl alcohol by the cytochrome P450 monooxygenase patI. The oxidoreductases patJ and patO further convert gentisyl alcohol to isoepoxydon in the vacuole. PatN catalyzes then the transformation of isoepoxydon into phyllostine. The cluster protein patF is responsible for the conversion from phyllostine to neopatulin whereas the alcohol dehydrogenase patD converts neopatulin to E-ascladiol. The steps between isoepoxydon and E-ascladiol occur in the cytosol, and E-ascladiol is probably secreted to the extracellular space by one of the cluster-specific transporters patC or patM. Finally, the secreted patulin synthase patE catalyzes the conversion of E-ascladiol to patulin. In Penicillium expansum (Blue mold rot fungus), this protein is 6-methylsalicylic acid synthase.